Reading from the N-terminus, the 408-residue chain is GTPase Obg (408 aa).

Positions 1–159 constitute an Obg domain; the sequence is MKFFDEARIE…RNLHLELKVL (159 aa). An OBG-type G domain is found at 160-334; the sequence is ADVGLLGMPN…LIFALQDFLD (175 aa). Residues 166–173, 191–195, 213–216, 284–287, and 315–317 each bind GTP; these read GMPNAGKS, FTTLQ, DIPG, NKLD, and SAL. Residues Ser173 and Thr193 each coordinate Mg(2+). The tract at residues 385 to 408 is disordered; that stretch reads AEDALAEDALDDDADGEDADPNAR.

This sequence belongs to the TRAFAC class OBG-HflX-like GTPase superfamily. OBG GTPase family. As to quaternary structure, monomer. The cofactor is Mg(2+).

The protein resides in the cytoplasm. Its function is as follows. An essential GTPase which binds GTP, GDP and possibly (p)ppGpp with moderate affinity, with high nucleotide exchange rates and a fairly low GTP hydrolysis rate. Plays a role in control of the cell cycle, stress response, ribosome biogenesis and in those bacteria that undergo differentiation, in morphogenesis control. This is GTPase Obg from Azoarcus sp. (strain BH72).